A 199-amino-acid polypeptide reads, in one-letter code: ATP-dependent Clp protease proteolytic subunit (199 aa).

Ser102 (nucleophile) is an active-site residue. Residue His127 is part of the active site.

Belongs to the peptidase S14 family. As to quaternary structure, fourteen ClpP subunits assemble into 2 heptameric rings which stack back to back to give a disk-like structure with a central cavity, resembling the structure of eukaryotic proteasomes.

It is found in the cytoplasm. It carries out the reaction Hydrolysis of proteins to small peptides in the presence of ATP and magnesium. alpha-casein is the usual test substrate. In the absence of ATP, only oligopeptides shorter than five residues are hydrolyzed (such as succinyl-Leu-Tyr-|-NHMec, and Leu-Tyr-Leu-|-Tyr-Trp, in which cleavage of the -Tyr-|-Leu- and -Tyr-|-Trp bonds also occurs).. Its function is as follows. Cleaves peptides in various proteins in a process that requires ATP hydrolysis. Has a chymotrypsin-like activity. Plays a major role in the degradation of misfolded proteins. The chain is ATP-dependent Clp protease proteolytic subunit from Pseudothermotoga lettingae (strain ATCC BAA-301 / DSM 14385 / NBRC 107922 / TMO) (Thermotoga lettingae).